The chain runs to 956 residues: Cytolysin RtxA (956 aa).

The segment at 48 to 58 is cholesterol recognition/amino acid consensus (CRAC) region 1; it reads LTIPKDYDIEK. Cholesterol recognition/amino acid consensus (CARC) region stretches follow at residues 280-287 and 340-348; these read KAISSYVL and KFGYDGDSL. The cholesterol recognition/amino acid consensus (CRAC) region 2 stretch occupies residues 349–354; the sequence is LAEYQR. Residues 444–453 form a cholesterol recognition/amino acid consensus (CARC) region 3 region; that stretch reads RHAHYLERNL. Lys-558 carries N6-myristoyl lysine lipidation. A Hemolysin-type calcium-binding 1 repeat occupies 613-639; the sequence is VNAGSGNDDIFAGQGKMNVDGGTGHDR. Lys-689 is lipidated: N6-myristoyl lysine. Hemolysin-type calcium-binding repeat units follow at residues 722–756 and 757–791; these read GSQF…DDRL and FGGN…GNDV.

Belongs to the RTX prokaryotic toxin (TC 1.C.11) family. Myristoylated by RtxC; the toxin only becomes active when modified. Mainly myristoylated; a very minor fraction is acylated with hydroxymyristoyl, lauroyl and palmitoleyl chains fatty acyl groups. Fatty acylation is involved in binding to host membranes and promotes the irreversible insertion of RtxA into the host cell membrane.

Its subcellular location is the secreted. It is found in the host cell membrane. In terms of biological role, bacterial cytolysin that attacks host cell membranes and causes cell rupture by forming a pore. Binds and permeabilizes target cells by forming cation-selective pores. Constitutes the key virulence cytotoxin of K.kingae. Binds cholesterol and oligosaccharides on the surface of host cells. Does not bind beta-2 integrin (ITGB2) on the host cell surface. In Kingella kingae, this protein is Cytolysin RtxA.